Here is a 56-residue protein sequence, read N- to C-terminus: Large ribosomal subunit protein eL37 (56 aa).

Cys-19, Cys-22, Cys-34, and Cys-37 together coordinate Zn(2+). The segment at 19–37 adopts a C4-type zinc-finger fold; that stretch reads CRRCGRLSYNFNRKTCVAC.

Belongs to the eukaryotic ribosomal protein eL37 family. The cofactor is Zn(2+).

Binds to the 23S rRNA. The sequence is that of Large ribosomal subunit protein eL37 from Methanothrix thermoacetophila (strain DSM 6194 / JCM 14653 / NBRC 101360 / PT) (Methanosaeta thermophila).